A 360-amino-acid polypeptide reads, in one-letter code: 45 kDa calcium-binding protein (360 aa).

An N-terminal signal peptide occupies residues 1–29 (MVSKQAFLFSLGSLYLSLLFVFLLMDVYA). A glycan (N-linked (GlcNAc...) asparagine) is linked at Asn33. EF-hand domains follow at residues 96-131 (RNRR…KTEE), 135-170 (EAVN…SKGF), 231-266 (MLKF…TVEN), 276-311 (WVRD…MNEY), and 312-347 (NALN…FTGS). Ca(2+)-binding residues include Asp109, Asn111, Asp113, Gln115, Glu120, Asp148, Asp150, Asp152, His154, Glu159, Asp244, Asp246, Asp248, Lys250, Glu255, Asp289, Asn291, Asp293, Glu300, Asp325, Asn327, Asp329, His331, and Glu336.

This sequence belongs to the CREC family.

The protein resides in the golgi apparatus lumen. In terms of biological role, may regulate calcium-dependent activities in the endoplasmic reticulum lumen or post-ER compartment. This chain is 45 kDa calcium-binding protein (sdf4), found in Xenopus tropicalis (Western clawed frog).